Reading from the N-terminus, the 60-residue chain is Cytotoxin 6 (60 aa).

4 disulfide bridges follow: C3–C21, C14–C38, C42–C53, and C54–C59.

It belongs to the three-finger toxin family. Short-chain subfamily. Type IA cytotoxin sub-subfamily. Monomer in solution; Homodimer and oligomer in the presence of negatively charged lipids forming a pore with a size ranging between 20 and 30 Angstroms. In terms of tissue distribution, expressed by the venom gland.

It localises to the secreted. Its subcellular location is the target cell membrane. Functionally, shows cytolytic activity on many different cells by forming pore in lipid membranes. In vivo, increases heart rate or kills the animal by cardiac arrest. In addition, it binds to heparin with high affinity, interacts with Kv channel-interacting protein 1 (KCNIP1) in a calcium-independent manner, and binds to integrin alpha-V/beta-3 (ITGAV/ITGB3) with moderate affinity. This chain is Cytotoxin 6, found in Naja annulifera (Banded Egyptian cobra).